The primary structure comprises 309 residues: Cytochrome c biogenesis protein CcsA (309 aa).

8 consecutive transmembrane segments (helical) span residues 18 to 38 (LGLL…GAVF), 48 to 68 (LITI…WSIS), 73 to 93 (ISNL…GQLL), 102 to 122 (IIPS…CFVL), 148 to 168 (VMLS…VLFI), 216 to 236 (SILV…VWAN), 250 to 267 (TWAF…HMRI), and 279 to 299 (LAST…FLGI).

The protein belongs to the CcmF/CycK/Ccl1/NrfE/CcsA family. May interact with ccs1.

Its subcellular location is the cellular thylakoid membrane. Required during biogenesis of c-type cytochromes (cytochrome c6 and cytochrome f) at the step of heme attachment. This Prochlorococcus marinus (strain AS9601) protein is Cytochrome c biogenesis protein CcsA.